Here is a 317-residue protein sequence, read N- to C-terminus: Probable pathogenesis-related protein CaO19.6200 (317 aa).

Positions 1–23 (MKFLQSFPVILAVFSFAANLVSS) are cleaved as a signal peptide. Disordered stretches follow at residues 52 to 116 (RLET…TTVT) and 155 to 179 (PSAPKPQPQPQPQENNSGTNDDSQL). The span at 58 to 76 (PTSTTTTIVIPSSKPSSPE) shows a compositional bias: low complexity. 2 stretches are compositionally biased toward polar residues: residues 84–116 (QPMFQSPSPVQITPSTTSINNAPSPTKPETTVT) and 168–179 (ENNSGTNDDSQL). Residue Asn-169 is glycosylated (N-linked (GlcNAc...) asparagine). The SCP domain maps to 187–297 (LEAHNIKRAS…GWGLYIICNY (111 aa)).

The protein belongs to the CRISP family.

Its subcellular location is the secreted. Secreted protein that acts as a virulence factor during infections. This Candida albicans (strain SC5314 / ATCC MYA-2876) (Yeast) protein is Probable pathogenesis-related protein CaO19.6200.